Here is a 280-residue protein sequence, read N- to C-terminus: Homeobox protein SMOX-1 (280 aa).

The interval 61 to 88 is disordered; that stretch reads PNNNSFQLNTTNDSNNNNTTNNGNDSRS. Positions 69-85 are enriched in low complexity; the sequence is NTTNDSNNNNTTNNGND. The Antp-type hexapeptide signature appears at 214–219; sequence VYPWMN. Positions 229 to 280 form a DNA-binding region, homeobox; it reads QKRTRQTYTRYQTLELEKEFHFNKYLTRRRRIEIAHTLTLTERQIKIWFQNR.

This sequence belongs to the Antp homeobox family.

It localises to the nucleus. The protein is Homeobox protein SMOX-1 (SMOX-1) of Schistosoma mansoni (Blood fluke).